Consider the following 320-residue polypeptide: NAC domain-containing protein 20 (320 aa).

The region spanning 14-170 (LPPGFRFHPT…DWAVCRIFHK (157 aa)) is the NAC domain. A DNA-binding region spans residues 114–176 (IGMKKTLVFY…IFHKSSGIKK (63 aa)).

Forms homodimers. Forms heterodimers with NAC26. As to expression, expressed in developing seeds. Expressed in developing endosperm.

Its subcellular location is the nucleus. The protein localises to the endoplasmic reticulum. In terms of biological role, transcription factor that acts redundantly with NAC26 to regulate the expression of genes involved in the biosynthesis of starch and storage proteins in grain. Directly binds to the promoters of starch synthase 1 (SS1), pullulanase (PUL), glutelin A1 (GLUA1), glutelins B4 and B5 (GLUB4 and GLUB5), alpha-globulin and 16 kDa prolamin, and activates their expression. In Oryza sativa subsp. japonica (Rice), this protein is NAC domain-containing protein 20.